The following is a 143-amino-acid chain: MAKKVAGQLKLQVKAGSANPSPPIGPALGQRGINIMEFCKAFNAATQEMEKGMPIPVVITYYQDKSFTFVMKQPPVSYFLKKEAKIQSGSKTPGKGAKAGTLTRAQVQSIAQAKMKDLNAADIEGAMAMIEGSARAMGLEVVG.

The protein belongs to the universal ribosomal protein uL11 family. Part of the ribosomal stalk of the 50S ribosomal subunit. Interacts with L10 and the large rRNA to form the base of the stalk. L10 forms an elongated spine to which L12 dimers bind in a sequential fashion forming a multimeric L10(L12)X complex. One or more lysine residues are methylated.

Forms part of the ribosomal stalk which helps the ribosome interact with GTP-bound translation factors. The chain is Large ribosomal subunit protein uL11 from Rhizobium rhizogenes (strain K84 / ATCC BAA-868) (Agrobacterium radiobacter).